The primary structure comprises 3175 residues: Replicase polyprotein 1ab (3175 aa).

The C4-type; atypical zinc finger occupies 25–44 (CEHGAGLCCEVDGSTLCAEC). A Peptidase C31 domain is found at 66-156 (SPVPVGHKFL…PAANSLIVTT (91 aa)). Residues 157 to 260 (DQEQDGFCWL…WSCLPAGNYG (104 aa)) form the Peptidase C32 domain. Residues Cys-164 and His-230 each act as for Nsp1 papain-like cysteine proteinase activity in the active site. The interval 261-339 (GYNPPGDGAC…KQHWRVKRAK (79 aa)) is OTU-like. Residues 261–360 (GYNPPGDGAC…RGICNCQRMS (100 aa)) enclose the Peptidase C33 domain. The active-site For Nsp2 cysteine proteinase activity is the Cys-270. A Zn(2+)-binding site is contributed by Cys-319. His-332 acts as the For Nsp2 cysteine proteinase activity in catalysis. The Zn(2+) site is built by Cys-349, Cys-354, and Cys-356. The segment at 386–451 (VVTPEGQPRP…TRLQGASTQE (66 aa)) is disordered. 7 helical membrane-spanning segments follow: residues 530–550 (AVIA…SFAI), 551–571 (GLIP…SSAN), 625–645 (FDAA…ILYL), 829–849 (LIGG…STFT), 903–923 (YWIA…RLAI), 935–955 (LVLL…SLAG), and 977–997 (LVTM…LMGL). Residues 530-645 (AVIACLLPIW…DLCSFAILYL (116 aa)) form an HD1 region. The segment at 829–997 (LIGGWIYGIC…ALAVYSLMGL (169 aa)) is HD2. The Peptidase S32 domain occupies 1065–1268 (GLFRSPKARG…MLIDGLSNRE (204 aa)). Catalysis depends on charge relay system; for 3C-like serine proteinase activity residues His-1103, Asp-1129, and Ser-1184. 4 helical membrane-spanning segments follow: residues 1291–1311 (AYLP…KSVG), 1333–1353 (CLFH…WFYI), 1355–1375 (AAGT…MLFV), and 1385–1405 (GWAI…AALG). The segment at 1291–1405 (AYLPYVLGFF…SITMLAAALG (115 aa)) is HD3. Asn-1501 carries N-linked (GlcNAc...) asparagine; by host glycosylation. A disordered region spans residues 1577–1614 (NDTPVKPMPSRRRRKGLPKGAQLEWDRHQEEKRNAGDD). Basic and acidic residues predominate over residues 1600 to 1612 (EWDRHQEEKRNAG). Residues 1716–1883 (LANPVEAVNQ…DKVAAAVSGD (168 aa)) form the NiRAN domain. Residues 2116-2251 (KYCLETDLES…TTPNQHYAAS (136 aa)) enclose the RdRp catalytic domain. The AV ZBD domain maps to 2371–2438 (SAVCTVCGAA…SPKQMVPKVP (68 aa)). The Zn(2+) site is built by Cys-2374, Cys-2377, Cys-2387, Cys-2392, Cys-2395, His-2399, His-2402, Cys-2403, Cys-2412, His-2414, Cys-2423, and Cys-2426. The (+)RNA virus helicase ATP-binding domain occupies 2496 to 2661 (PGSHIAVPLQ…LRHFVSLEPL (166 aa)). Residue 2528 to 2535 (GPPGSGKT) participates in ATP binding. Residues 2662–2793 (RVCHRFGAAV…PPTACHLGQE (132 aa)) form the (+)RNA virus helicase C-terminal domain. The region spanning 2840–2930 (KISCLPRVAQ…LTEWVDGKAR (91 aa)) is the AV-Nsp11N/CoV-Nsp15M domain. Residues 2932–3054 (LPDSLFSSGR…MVWRNATFYV (123 aa)) enclose the NendoU domain. Active-site residues include His-2963, His-2978, and Lys-3007.

It belongs to the arteriviridae polyprotein family. In terms of assembly, nsp1 interacts with cellular transcription cofactor SND1/p100. In terms of processing, specific enzymatic cleavages in vivo by its own proteases yield mature proteins. There are two alternative pathways for processing. Either nsp4-5 is cleaved, which represents the major pathway or the nsp5-6 and nsp6-7 are processed, which represents the minor pathway. The major pathway occurs when nsp2 acts as a cofactor for nsp4.

It localises to the host nucleus. Its subcellular location is the host cytoplasm. It is found in the host membrane. The protein resides in the host perinuclear region. It carries out the reaction RNA(n) + a ribonucleoside 5'-triphosphate = RNA(n+1) + diphosphate. It catalyses the reaction ATP + H2O = ADP + phosphate + H(+). The catalysed reaction is Thiol-dependent hydrolysis of ester, thioester, amide, peptide and isopeptide bonds formed by the C-terminal Gly of ubiquitin (a 76-residue protein attached to proteins as an intracellular targeting signal).. The enzyme catalyses uridylyl-uridylyl-ribonucleotide-RNA = a 3'-end uridylyl-2',3'-cyclophospho-uridine-RNA + a 5'-end dephospho-ribonucleoside-RNA. Functionally, the replicase polyprotein 1ab is a multifunctional protein: it contains the activities necessary for the transcription of negative stranded RNA, leader RNA, subgenomic mRNAs and progeny virion RNA as well as proteinases responsible for the cleavage of the polyprotein into functional products. In terms of biological role, nsp1 is essential for viral subgenomic mRNA synthesis. Its function is as follows. Nsp2 cysteine proteinase which cleaves the nsp2/nsp3 site in the polyprotein. Also displays deubiquitinating and deISGylase activities. The deubiquitinating activity cleaves both ubiquitinated and ISGylated products and may therefore regulate ubiquitin and ISG15 dependent host innate immunity. The 3C-like serine proteinase chain is responsible for the majority of cleavages as it cleaves the C-terminus of the polyprotein. Functionally, the helicase chain, which contains a zinc finger structure, displays RNA and DNA duplex-unwinding activities with 5' to 3' polarity. In terms of biological role, plays a role in viral transcription/replication and prevents the simultaneous activation of host cell dsRNA sensors, such as MDA5/IFIH1, OAS, and PKR. Acts by degrading the 5'-polyuridines generated during replication of the poly(A) region of viral genomic and subgenomic RNAs. Catalyzes a two-step reaction in which a 2'3'-cyclic phosphate (2'3'-cP) is first generated by 2'-O transesterification, which is then hydrolyzed to a 3'-phosphate (3'-P). If not degraded, poly(U) RNA would hybridize with poly(A) RNA tails and activate host dsRNA sensors. This chain is Replicase polyprotein 1ab (rep), found in Equidae (horses).